We begin with the raw amino-acid sequence, 337 residues long: GTPase Obg (337 aa).

An Obg domain is found at 1-158 (MFIDEVRILV…KRLRLELKLL (158 aa)). 2 stretches are compositionally biased toward basic and acidic residues: residues 61–74 (NPEH…HGEG) and 137–146 (PTEHEPGRPG). Disordered stretches follow at residues 61–83 (NPEH…AEGR) and 119–146 (GGRG…GRPG). The 172-residue stretch at 159 to 330 (ADVGLVGFPN…LKHAMADRVL (172 aa)) folds into the OBG-type G domain. GTP-binding positions include 165–172 (GFPNAGKS), 190–194 (FTTLE), 212–215 (DIPG), 282–285 (TKMD), and 311–313 (SSA). 2 residues coordinate Mg(2+): S172 and T192.

It belongs to the TRAFAC class OBG-HflX-like GTPase superfamily. OBG GTPase family. Monomer. It depends on Mg(2+) as a cofactor.

It is found in the cytoplasm. In terms of biological role, an essential GTPase which binds GTP, GDP and possibly (p)ppGpp with moderate affinity, with high nucleotide exchange rates and a fairly low GTP hydrolysis rate. Plays a role in control of the cell cycle, stress response, ribosome biogenesis and in those bacteria that undergo differentiation, in morphogenesis control. This chain is GTPase Obg, found in Solibacter usitatus (strain Ellin6076).